The chain runs to 393 residues: RNA polymerase II holoenzyme cyclin-like subunit (393 aa).

One can recognise a Cyclin N-terminal domain in the interval 51–146 (ICKRLNLRQR…LLEEMEFDMV (96 aa)).

The protein belongs to the cyclin family. Cyclin C subfamily. As to quaternary structure, component of the SRB8-11 complex, a regulatory module of the Mediator complex.

It localises to the nucleus. Component of the SRB8-11 complex. The SRB8-11 complex is a regulatory module of the Mediator complex which is itself involved in regulation of basal and activated RNA polymerase II-dependent transcription. The SRB8-11 complex may be involved in the transcriptional repression of a subset of genes regulated by Mediator. It may inhibit the association of the Mediator complex with RNA polymerase II to form the holoenzyme complex. The SRB8-11 complex phosphorylates the C-terminal domain (CTD) of the largest subunit of RNA polymerase II. The sequence is that of RNA polymerase II holoenzyme cyclin-like subunit (SSN8) from Mycosarcoma maydis (Corn smut fungus).